The primary structure comprises 628 residues: Leucine-rich repeat and fibronectin type-III domain-containing protein 3 (628 aa).

Residues 1–16 (MAVLPLLLCLLPLAPA) form the signal peptide. Residues 17–540 (SSPSQPATPS…APHAPFLGGT (524 aa)) lie on the Extracellular side of the membrane. The LRRNT domain maps to 19–59 (PSQPATPSPCPRRCRCQTQSLPLSVLCPGAGLLFVPPSLDR). 6 LRR repeats span residues 84–105 (GLLHLSLSRNTIRHVAAGAFAD), 108–129 (ALRALHLDGNRLTSLGEGQLRG), 132–153 (NLRHLILSNNQLAALAAGALDD), 157–178 (TLEDLDLSYNNLEQLPWEALGR), 181–202 (NVNTLGLDHNLLASVPAGAFSR), and 205–226 (KLARLDMTSNRLTTIPPDPLFS). The LRRCT domain maps to 249-295 (NPLHCNCELVWLRRLAREDDLEACASPPALGGRYFWAVGEEEFVCEP). The 88-residue stretch at 295-382 (PPVVTHRSPP…GEATAAVELT (88 aa)) folds into the Ig-like domain. The cysteines at positions 317 and 366 are disulfide-linked. 2 N-linked (GlcNAc...) asparagine glycosylation sites follow: N348 and N393. Residues 380-432 (ELTVGPPPPPQLANSTSCDPPRDGDPDALTPPSAASASAAAKAADTGPPTDRG) form a disordered region. A compositionally biased stretch (low complexity) spans 406–429 (DALTPPSAASASAAAKAADTGPPT). Residues 427 to 525 (PPTDRGVQVT…GCARFSTEPA (99 aa)) form the Fibronectin type-III domain. A helical transmembrane segment spans residues 541–561 (MIIALGGVIVASVLVFIFVLL). Residues 562–628 (MRYKVHGGQP…WRPSHEPTGP (67 aa)) lie on the Cytoplasmic side of the membrane. The segment at 587–628 (QTNGSLGPTPAPPAPEPAAPRAHTVVQLDCEPWRPSHEPTGP) is disordered. Pro residues predominate over residues 595-604 (TPAPPAPEPA). Residues 617–628 (EPWRPSHEPTGP) are compositionally biased toward basic and acidic residues.

Belongs to the LRFN family. As to quaternary structure, can form heteromeric complexes with LRFN1, LRFN2, LRFN4 and LRFN5. Able to form homomeric complexes across cell junctions, between adjacent cells. Does not interact with DLG4. Post-translationally, N-glycosylated.

It is found in the cell membrane. The protein resides in the cell projection. It localises to the axon. Its subcellular location is the dendrite. The protein localises to the synapse. It is found in the presynaptic cell membrane. The protein resides in the postsynaptic cell membrane. Its function is as follows. Cell adhesion molecule that mediates homophilic cell-cell adhesion in a Ca(2+)-independent manner. Promotes neurite outgrowth in hippocampal neurons. The sequence is that of Leucine-rich repeat and fibronectin type-III domain-containing protein 3 (LRFN3) from Ailuropoda melanoleuca (Giant panda).